We begin with the raw amino-acid sequence, 605 residues long: Replication protein E1 (605 aa).

The short motif at 80-82 is the Nuclear localization signal element; that stretch reads KRK. Ser85 and Ser93 each carry phosphoserine; by host. The Nuclear export signal motif lies at 92 to 101; that stretch reads LSPQLESISL. The DNA-binding region stretch occupies residues 145–308; it reads QGTKGLGIVK…TLINHQSANA (164 aa). The region spanning 407 to 557 is the SF3 helicase domain; that stretch reads INFIEFLTVF…FPLDANHKPQ (151 aa). 433 to 440 contacts ATP; that stretch reads GPPDTGKS. A Glycyl lysine isopeptide (Lys-Gly) (interchain with G-Cter in SUMO) cross-link involves residue Lys514.

It belongs to the papillomaviridae E1 protein family. Can form hexamers. Interacts with E2 protein; this interaction increases E1 DNA binding specificity. Interacts with host DNA polymerase subunit POLA2. Interacts with host single stranded DNA-binding protein RPA1. Interacts with host TOP1; this interaction stimulates the enzymatic activity of TOP1. Phosphorylated. Post-translationally, sumoylated.

The protein resides in the host nucleus. The enzyme catalyses Couples ATP hydrolysis with the unwinding of duplex DNA by translocating in the 3'-5' direction.. It carries out the reaction ATP + H2O = ADP + phosphate + H(+). In terms of biological role, ATP-dependent DNA 3'-5' helicase required for initiation of viral DNA replication. It forms a complex with the viral E2 protein. The E1-E2 complex binds to the replication origin which contains binding sites for both proteins. During the initial step, a dimer of E1 interacts with a dimer of protein E2 leading to a complex that binds the viral origin of replication with high specificity. Then, a second dimer of E1 displaces the E2 dimer in an ATP-dependent manner to form the E1 tetramer. Following this, two E1 monomers are added to each half of the site, which results in the formation of two E1 trimers on the viral ori. Subsequently, two hexamers will be created. The double hexamer acts as a bi-directional helicase machinery and unwinds the viral DNA and then recruits the host DNA polymerase to start replication. The chain is Replication protein E1 from Homo sapiens (Human).